The primary structure comprises 344 residues: Dihydroorotase (344 aa).

Zn(2+) is bound by residues histidine 14 and histidine 16. Residues 16–18 (HLR) and asparagine 42 contribute to the substrate site. Lysine 100, histidine 137, and histidine 175 together coordinate Zn(2+). Lysine 100 is subject to N6-carboxylysine. Histidine 137 provides a ligand contact to substrate. Leucine 220 serves as a coordination point for substrate. Zn(2+) is bound at residue aspartate 248. Aspartate 248 is a catalytic residue. Positions 252 and 264 each coordinate substrate.

The protein belongs to the metallo-dependent hydrolases superfamily. DHOase family. Class II DHOase subfamily. As to quaternary structure, homodimer. It depends on Zn(2+) as a cofactor.

It catalyses the reaction (S)-dihydroorotate + H2O = N-carbamoyl-L-aspartate + H(+). It functions in the pathway pyrimidine metabolism; UMP biosynthesis via de novo pathway; (S)-dihydroorotate from bicarbonate: step 3/3. Catalyzes the reversible cyclization of carbamoyl aspartate to dihydroorotate. This chain is Dihydroorotase, found in Cupriavidus pinatubonensis (strain JMP 134 / LMG 1197) (Cupriavidus necator (strain JMP 134)).